The chain runs to 271 residues: Delta(7)-sterol-C5(6)-desaturase (271 aa).

2 helical membrane passes run 44–64 (IGGV…IYHL) and 120–140 (VGWL…EFGI). Positions 130-259 (AIYLVIVEFG…TIWMDWMFGT (130 aa)) constitute a Fatty acid hydroxylase domain. The Histidine box-1 motif lies at 144 to 148 (HMELH). The Histidine box-2 signature appears at 158–162 (HATHH). Residues 190-210 (HVVALLLVPMHFSTHIALIFL) form a helical membrane-spanning segment. Positions 235–239 (HTIHH) match the Histidine box-3 motif.

The protein belongs to the sterol desaturase family. It depends on Fe cation as a cofactor.

Its subcellular location is the endoplasmic reticulum membrane. It catalyses the reaction a Delta(7)-sterol + 2 Fe(II)-[cytochrome b5] + O2 + 2 H(+) = a Delta(5),Delta(7)-sterol + 2 Fe(III)-[cytochrome b5] + 2 H2O. Functionally, involved in the biosynthesis of sitosterol and campesterol. This chain is Delta(7)-sterol-C5(6)-desaturase, found in Nicotiana tabacum (Common tobacco).